The following is a 110-amino-acid chain: Nucleoid-associated protein Sfum_2790 (110 aa).

Belongs to the YbaB/EbfC family. Homodimer.

It is found in the cytoplasm. Its subcellular location is the nucleoid. In terms of biological role, binds to DNA and alters its conformation. May be involved in regulation of gene expression, nucleoid organization and DNA protection. The chain is Nucleoid-associated protein Sfum_2790 from Syntrophobacter fumaroxidans (strain DSM 10017 / MPOB).